A 151-amino-acid chain; its full sequence is Calmodulin-like protein 9 (151 aa).

EF-hand domains are found at residues glutamate 8–asparagine 43, proline 44–glutamine 79, serine 81–lysine 116, and isoleucine 117–tyrosine 151. Aspartate 94, aspartate 96, aspartate 98, glutamate 105, aspartate 130, aspartate 132, aspartate 134, and glutamate 141 together coordinate Ca(2+).

This sequence belongs to the calmodulin family. Interacts with IQD1. Interacts with ILK1. Binds to ABCG36. Expressed in leaves, flowers and siliques.

In terms of biological role, potential calcium sensor. The sequence is that of Calmodulin-like protein 9 from Arabidopsis thaliana (Mouse-ear cress).